The primary structure comprises 1434 residues: Nitric oxide synthase 1 (1434 aa).

Residues 1 to 205 (MEDHMFGVQQ…LQGRGENNEL (205 aa)) are interaction with NOSIP. One can recognise a PDZ domain in the interval 17 to 99 (SVRLFKRKVG…ETHVVLILRG (83 aa)). Disordered stretches follow at residues 112-192 (TGDG…KKAT) and 276-302 (NNPY…PSKC). The interval 163–245 (YDDGQEAGSL…MGIQVDRDLD (83 aa)) is interaction with DYNLL1/PIN. Over residues 285–299 (PPTSGKQSPTKNGSP) the composition is skewed to polar residues. Ser-339 is a (6R)-L-erythro-5,6,7,8-tetrahydrobiopterin binding site. Heme b is bound at residue Cys-420. L-arginine contacts are provided by Gln-483, Trp-592, Tyr-593, and Glu-597. (6R)-L-erythro-5,6,7,8-tetrahydrobiopterin is bound by residues Val-682, Trp-683, and Phe-696. Position 711 (Tyr-711) interacts with heme b. The interval 730 to 750 (KRRAIGFKKLAEAVKFSAKLM) is calmodulin-binding. The Flavodoxin-like domain occupies 760-940 (ATILYATETG…AFRTWAKKVF (181 aa)). FMN is bound by residues Thr-766, Glu-767, Thr-768, Lys-770, Ser-771, Ser-812, Thr-813, and Gly-817. Phosphoserine is present on residues Ser-852, Ser-862, and Ser-863. Ser-891, His-896, Cys-898, Glu-924, and Gln-928 together coordinate FMN. The 248-residue stretch at 995–1242 (KRVSAARLLS…VRGAPSFHLP (248 aa)) folds into the FAD-binding FR-type domain. Residue Arg-1015 coordinates NADP(+). The FAD site is built by His-1037, Arg-1178, Tyr-1179, Tyr-1180, Ser-1181, Thr-1196, and Ala-1198. Position 1201 (Ser-1201) interacts with NADP(+). FAD is bound by residues Tyr-1202, Val-1215, Cys-1216, and Ser-1217. Thr-1256, Arg-1289, Ser-1318, Arg-1319, Lys-1325, Tyr-1327, Gln-1329, Asp-1362, Thr-1403, and Arg-1405 together coordinate NADP(+).

This sequence belongs to the NOS family. As to quaternary structure, homodimer. Interacts with DLG4; the interaction possibly being prevented by the association between NOS1 and CAPON. Forms a ternary complex with CAPON and RASD1. Forms a ternary complex with CAPON and SYN1. Interacts with ZDHHC23. Interacts with NOSIP; which may impair its synaptic location. Interacts with HTR4. Interacts with SLC6A4. Interacts with VAC14. Interacts (via N-terminal domain) with DLG4 (via N-terminal tandem pair of PDZ domains). Interacts with SLC6A4. Forms a complex with ASL, ASS1 and SLC7A1; the complex regulates cell-autonomous L-arginine synthesis and citrulline recycling while channeling extracellular L-arginine to nitric oxide synthesis pathway. Interacts with DMD; localizes NOS1 to sarcolemma in muscle cells. Interacts with DYNLL1; inhibits the nitric oxide synthase activity. Heme b is required as a cofactor. The cofactor is FAD. Requires FMN as cofactor. It depends on (6R)-L-erythro-5,6,7,8-tetrahydrobiopterin as a cofactor. Post-translationally, ubiquitinated; mediated by STUB1/CHIP in the presence of Hsp70 and Hsp40 (in vitro). In terms of tissue distribution, isoform 1 is ubiquitously expressed: detected in skeletal muscle and brain, also in testis, lung and kidney, and at low levels in heart, adrenal gland and retina. Not detected in the platelets. Isoform 3 is expressed only in testis. Isoform 4 is detected in testis, skeletal muscle, lung, and kidney, at low levels in the brain, but not in the heart and adrenal gland.

The protein resides in the cell membrane. It localises to the sarcolemma. The protein localises to the cell projection. It is found in the dendritic spine. It catalyses the reaction 2 L-arginine + 3 NADPH + 4 O2 + H(+) = 2 L-citrulline + 2 nitric oxide + 3 NADP(+) + 4 H2O. Stimulated by calcium/calmodulin. Inhibited by DYNLL1 that prevents the dimerization of the protein. Inhibited by NOSIP. In terms of biological role, produces nitric oxide (NO) which is a messenger molecule with diverse functions throughout the body. In the brain and peripheral nervous system, NO displays many properties of a neurotransmitter. Probably has nitrosylase activity and mediates cysteine S-nitrosylation of cytoplasmic target proteins such SRR. The protein is Nitric oxide synthase 1 of Homo sapiens (Human).